Here is a 24-residue protein sequence, read N- to C-terminus: U1-poneritoxin-Na1a (24 aa).

The protein belongs to the non-disulfide-bridged peptide (NDBP) superfamily. Medium-length antimicrobial peptide (group 3) family. Ponericin-W subfamily. In terms of tissue distribution, expressed by the venom gland.

The protein localises to the secreted. The protein resides in the target cell membrane. In terms of biological role, has a broad spectrum of activity against both Gram-positive and Gram-negative bacteria and S.cerevisiae. Has insecticidal and hemolytic activities. May act by disrupting the integrity of the bacterial cell membrane. In Neoponera apicalis (Ant), this protein is U1-poneritoxin-Na1a.